A 185-amino-acid chain; its full sequence is Elongation factor P (185 aa).

It belongs to the elongation factor P family.

It is found in the cytoplasm. Its pathway is protein biosynthesis; polypeptide chain elongation. In terms of biological role, involved in peptide bond synthesis. Stimulates efficient translation and peptide-bond synthesis on native or reconstituted 70S ribosomes in vitro. Probably functions indirectly by altering the affinity of the ribosome for aminoacyl-tRNA, thus increasing their reactivity as acceptors for peptidyl transferase. The sequence is that of Elongation factor P from Picosynechococcus sp. (strain ATCC 27264 / PCC 7002 / PR-6) (Agmenellum quadruplicatum).